We begin with the raw amino-acid sequence, 485 residues long: ATP-dependent 6-phosphofructokinase (485 aa).

ATP is bound by residues Gly-105, 171-172 (RG), and 196-199 (GDGT). Residue Asp-197 participates in Mg(2+) binding. Residues 225–227 (TID), 270–272 (MGR), Glu-323, and 378–381 (YMIR) contribute to the substrate site. Asp-227 acts as the Proton acceptor in catalysis. The Peroxisomal targeting signal signature appears at 483-485 (SKL).

This sequence belongs to the phosphofructokinase type A (PFKA) family. PPi-dependent PFK group II subfamily. Atypical ATP-dependent clade 'X' sub-subfamily. In terms of assembly, homotetramer. Mg(2+) is required as a cofactor.

Its subcellular location is the glycosome. The enzyme catalyses beta-D-fructose 6-phosphate + ATP = beta-D-fructose 1,6-bisphosphate + ADP + H(+). The protein operates within carbohydrate degradation; glycolysis; D-glyceraldehyde 3-phosphate and glycerone phosphate from D-glucose: step 3/4. Its activity is regulated as follows. Allosterically activated by AMP. In terms of biological role, catalyzes the phosphorylation of D-fructose 6-phosphate to fructose 1,6-bisphosphate by ATP, the first committing step of glycolysis. The chain is ATP-dependent 6-phosphofructokinase from Trypanosoma cruzi (strain CL Brener).